Consider the following 328-residue polypeptide: Malate dehydrogenase 2 (328 aa).

NAD(+) is bound at residue 12–18 (GAAGQIA). The substrate site is built by Arg93 and Arg99. NAD(+) is bound by residues Asn106, Gln113, and 130-132 (VGN). Asn132 and Arg163 together coordinate substrate. The active-site Proton acceptor is the His188.

The protein belongs to the LDH/MDH superfamily. MDH type 2 family.

It catalyses the reaction (S)-malate + NAD(+) = oxaloacetate + NADH + H(+). Its function is as follows. Catalyzes the reversible oxidation of malate to oxaloacetate. The protein is Malate dehydrogenase 2 of Burkholderia vietnamiensis (strain G4 / LMG 22486) (Burkholderia cepacia (strain R1808)).